We begin with the raw amino-acid sequence, 367 residues long: UDP-N-acetylglucosamine--N-acetylmuramyl-(pentapeptide) pyrophosphoryl-undecaprenol N-acetylglucosamine transferase (367 aa).

UDP-N-acetyl-alpha-D-glucosamine-binding positions include 15 to 17, Asn-127, Arg-163, Ser-191, Ile-249, and Gln-294; that span reads TGG.

It belongs to the glycosyltransferase 28 family. MurG subfamily.

It localises to the cell inner membrane. It catalyses the reaction di-trans,octa-cis-undecaprenyl diphospho-N-acetyl-alpha-D-muramoyl-L-alanyl-D-glutamyl-meso-2,6-diaminopimeloyl-D-alanyl-D-alanine + UDP-N-acetyl-alpha-D-glucosamine = di-trans,octa-cis-undecaprenyl diphospho-[N-acetyl-alpha-D-glucosaminyl-(1-&gt;4)]-N-acetyl-alpha-D-muramoyl-L-alanyl-D-glutamyl-meso-2,6-diaminopimeloyl-D-alanyl-D-alanine + UDP + H(+). It participates in cell wall biogenesis; peptidoglycan biosynthesis. Functionally, cell wall formation. Catalyzes the transfer of a GlcNAc subunit on undecaprenyl-pyrophosphoryl-MurNAc-pentapeptide (lipid intermediate I) to form undecaprenyl-pyrophosphoryl-MurNAc-(pentapeptide)GlcNAc (lipid intermediate II). The polypeptide is UDP-N-acetylglucosamine--N-acetylmuramyl-(pentapeptide) pyrophosphoryl-undecaprenol N-acetylglucosamine transferase (Burkholderia cenocepacia (strain ATCC BAA-245 / DSM 16553 / LMG 16656 / NCTC 13227 / J2315 / CF5610) (Burkholderia cepacia (strain J2315))).